We begin with the raw amino-acid sequence, 67 residues long: Large ribosomal subunit protein bL32 (67 aa).

Over residues 1–19 (MAVPKRKMSRSNTRSRRSQ) the composition is skewed to basic residues. The interval 1–22 (MAVPKRKMSRSNTRSRRSQWKA) is disordered.

Belongs to the bacterial ribosomal protein bL32 family.

The polypeptide is Large ribosomal subunit protein bL32 (Kineococcus radiotolerans (strain ATCC BAA-149 / DSM 14245 / SRS30216)).